The primary structure comprises 303 residues: Sporulation regulatory protein (303 aa).

Residues 26–213 (TGRLRAGLRK…HRVNDKQTAE (188 aa)) form the FtsK domain. 43–50 (GANHSGKS) serves as a coordination point for ATP.

Its function is as follows. Involved in sporulation inhibition and pock formation. This Streptomyces azureus protein is Sporulation regulatory protein (spi).